Reading from the N-terminus, the 291-residue chain is Transmembrane O-methyltransferase (291 aa).

A helical membrane pass occupies residues 31–51; it reads VGTMSPAIALAFLPLVVTLLV. S-adenosyl-L-methionine is bound by residues glutamate 137, 139-140, serine 145, glutamate 163, and serine 193; that span reads GT.

This sequence belongs to the class I-like SAM-binding methyltransferase superfamily. Cation-dependent O-methyltransferase family. As to quaternary structure, interacts with LHFPL5, PCDH15, TMC1, TMC2 and TMIE. Interacts directly with TMC1. The interaction of TOMT with TMC1 and TMC2 is required for the transportation of TMC1/2 into the stereocilia of hair cells.

The protein resides in the membrane. Its subcellular location is the cytoplasm. It is found in the endoplasmic reticulum. The catalysed reaction is a catechol + S-adenosyl-L-methionine = a guaiacol + S-adenosyl-L-homocysteine + H(+). Functionally, catalyzes the O-methylation, and thereby the inactivation, of catecholamine neurotransmitters and catechol hormones. Required for auditory function. Component of the cochlear hair cell's mechanotransduction (MET) machinery. Involved in the assembly of the asymmetric tip-link MET complex. Required for transportation of TMC1 and TMC2 proteins into the mechanically sensitive stereocilia of the hair cells. The function in MET is independent of the enzymatic activity. The chain is Transmembrane O-methyltransferase from Homo sapiens (Human).